A 220-amino-acid chain; its full sequence is Deoxyribose-phosphate aldolase (220 aa).

The active-site Proton donor/acceptor is Asp-89. Lys-151 acts as the Schiff-base intermediate with acetaldehyde in catalysis. The active-site Proton donor/acceptor is the Lys-180.

It belongs to the DeoC/FbaB aldolase family. DeoC type 1 subfamily.

Its subcellular location is the cytoplasm. The catalysed reaction is 2-deoxy-D-ribose 5-phosphate = D-glyceraldehyde 3-phosphate + acetaldehyde. It participates in carbohydrate degradation; 2-deoxy-D-ribose 1-phosphate degradation; D-glyceraldehyde 3-phosphate and acetaldehyde from 2-deoxy-alpha-D-ribose 1-phosphate: step 2/2. Catalyzes a reversible aldol reaction between acetaldehyde and D-glyceraldehyde 3-phosphate to generate 2-deoxy-D-ribose 5-phosphate. In Streptococcus suis (strain 98HAH33), this protein is Deoxyribose-phosphate aldolase.